A 367-amino-acid polypeptide reads, in one-letter code: tRNA pseudouridine synthase D (367 aa).

The Nucleophile role is filled by aspartate 80. Residues 156–316 (GIPNWFGEQR…LKQERRALRL (161 aa)) form the TRUD domain.

This sequence belongs to the pseudouridine synthase TruD family.

The catalysed reaction is uridine(13) in tRNA = pseudouridine(13) in tRNA. Its function is as follows. Responsible for synthesis of pseudouridine from uracil-13 in transfer RNAs. The polypeptide is tRNA pseudouridine synthase D (Xanthomonas campestris pv. campestris (strain 8004)).